Consider the following 256-residue polypeptide: Small ribosomal subunit protein uS3 (256 aa).

The region spanning 39–121 (IRTYLTKQLS…TIRINVVEVT (83 aa)) is the KH type-2 domain. The interval 227-256 (RHEQKFPLQQPKRRQQRRRPTFEDRSAQEA) is disordered. Basic and acidic residues predominate over residues 246–256 (PTFEDRSAQEA).

It belongs to the universal ribosomal protein uS3 family. In terms of assembly, part of the 30S ribosomal subunit. Forms a tight complex with proteins S10 and S14.

Its function is as follows. Binds the lower part of the 30S subunit head. Binds mRNA in the 70S ribosome, positioning it for translation. The sequence is that of Small ribosomal subunit protein uS3 from Synechococcus sp. (strain JA-2-3B'a(2-13)) (Cyanobacteria bacterium Yellowstone B-Prime).